Reading from the N-terminus, the 426-residue chain is Glucose-6-phosphate isomerase (426 aa).

Glu-282 serves as the catalytic Proton donor. Catalysis depends on residues His-303 and Lys-419.

This sequence belongs to the GPI family.

The protein resides in the cytoplasm. The enzyme catalyses alpha-D-glucose 6-phosphate = beta-D-fructose 6-phosphate. The protein operates within carbohydrate biosynthesis; gluconeogenesis. Its pathway is carbohydrate degradation; glycolysis; D-glyceraldehyde 3-phosphate and glycerone phosphate from D-glucose: step 2/4. In terms of biological role, catalyzes the reversible isomerization of glucose-6-phosphate to fructose-6-phosphate. In Mycoplasmoides gallisepticum (strain R(low / passage 15 / clone 2)) (Mycoplasma gallisepticum), this protein is Glucose-6-phosphate isomerase.